The chain runs to 565 residues: 2-(3-amino-3-carboxypropyl)histidine synthase subunit 2 (565 aa).

[4Fe-4S] cluster contacts are provided by Cys139, Cys160, and Cys377. Disordered stretches follow at residues Gln424 to Thr458 and His464 to Val483.

It belongs to the DPH1/DPH2 family. DPH2 subfamily. As to quaternary structure, component of the 2-(3-amino-3-carboxypropyl)histidine synthase complex composed of dph1, dph2, dph3 and a NADH-dependent reductase, predominantly cbr1. [4Fe-4S] cluster serves as cofactor.

It localises to the cytoplasm. It functions in the pathway protein modification; peptidyl-diphthamide biosynthesis. Functionally, required for the first step of diphthamide biosynthesis, a post-translational modification of histidine which occurs in elongation factor 2. Dph1 and dph2 transfer a 3-amino-3-carboxypropyl (ACP) group from S-adenosyl-L-methionine (SAM) to a histidine residue, the reaction is assisted by a reduction system comprising dph3 and a NADH-dependent reductase, predominantly cbr1. Facilitates the reduction of the catalytic iron-sulfur cluster found in the dph1 subunit. The chain is 2-(3-amino-3-carboxypropyl)histidine synthase subunit 2 (dph2) from Aspergillus fumigatus (strain ATCC MYA-4609 / CBS 101355 / FGSC A1100 / Af293) (Neosartorya fumigata).